The chain runs to 647 residues: Threonine--tRNA ligase (647 aa).

One can recognise a TGS domain in the interval 1–61; sequence MIKITFPDGA…EEDGSIEIVT (61 aa). The segment at 240–538 is catalytic; that stretch reads DHRKLGKELD…LIETYKGAFP (299 aa). 3 residues coordinate Zn(2+): cysteine 334, histidine 385, and histidine 515.

It belongs to the class-II aminoacyl-tRNA synthetase family. As to quaternary structure, homodimer. Zn(2+) serves as cofactor.

The protein resides in the cytoplasm. The enzyme catalyses tRNA(Thr) + L-threonine + ATP = L-threonyl-tRNA(Thr) + AMP + diphosphate + H(+). Its function is as follows. Catalyzes the attachment of threonine to tRNA(Thr) in a two-step reaction: L-threonine is first activated by ATP to form Thr-AMP and then transferred to the acceptor end of tRNA(Thr). Also edits incorrectly charged L-seryl-tRNA(Thr). The chain is Threonine--tRNA ligase from Streptococcus pyogenes serotype M2 (strain MGAS10270).